The sequence spans 506 residues: Probable lipid II flippase MurJ (506 aa).

The next 13 helical transmembrane spans lie at tyrosine 4–valine 24, threonine 86–alanine 106, valine 127–valine 147, isoleucine 153–phenylalanine 173, isoleucine 181–alanine 201, isoleucine 232–leucine 252, alanine 263–phenylalanine 283, isoleucine 308–leucine 328, threonine 345–phenylalanine 365, threonine 377–isoleucine 397, leucine 405–leucine 425, isoleucine 436–phenylalanine 456, and leucine 474–isoleucine 494.

Belongs to the MurJ/MviN family.

Its subcellular location is the cell inner membrane. It participates in cell wall biogenesis; peptidoglycan biosynthesis. Functionally, involved in peptidoglycan biosynthesis. Transports lipid-linked peptidoglycan precursors from the inner to the outer leaflet of the cytoplasmic membrane. The polypeptide is Probable lipid II flippase MurJ (Borreliella burgdorferi (strain ATCC 35210 / DSM 4680 / CIP 102532 / B31) (Borrelia burgdorferi)).